Reading from the N-terminus, the 286-residue chain is Pantothenate synthetase (286 aa).

An ATP-binding site is contributed by 30–37 (MGNLHDGH). Residue H37 is the Proton donor of the active site. Q61 lines the (R)-pantoate pocket. Q61 is a beta-alanine binding site. 148-151 (GKKD) provides a ligand contact to ATP. Q154 contributes to the (R)-pantoate binding site. Residues V177 and 185–188 (LSSR) contribute to the ATP site.

This sequence belongs to the pantothenate synthetase family. Homodimer.

The protein resides in the cytoplasm. It catalyses the reaction (R)-pantoate + beta-alanine + ATP = (R)-pantothenate + AMP + diphosphate + H(+). The protein operates within cofactor biosynthesis; (R)-pantothenate biosynthesis; (R)-pantothenate from (R)-pantoate and beta-alanine: step 1/1. Functionally, catalyzes the condensation of pantoate with beta-alanine in an ATP-dependent reaction via a pantoyl-adenylate intermediate. In Psychrobacter sp. (strain PRwf-1), this protein is Pantothenate synthetase.